The sequence spans 180 residues: ADP-ribosylation factor-like protein 1 (180 aa).

Residue Gly2 is the site of N-myristoyl glycine attachment. GTP is bound by residues Gly23–Thr30, Asp66–Gln70, and Asn125–Asp128.

This sequence belongs to the small GTPase superfamily. Arf family.

Functionally, GTP-binding protein involved in protein trafficking; may modulate vesicle budding and uncoating within the Golgi apparatus. This chain is ADP-ribosylation factor-like protein 1 (Arl1), found in Drosophila melanogaster (Fruit fly).